The primary structure comprises 332 residues: Solute carrier family 25 member 16 (332 aa).

3 Solcar repeats span residues 34–120 (FYWL…YKTF), 128–216 (SGHV…LKSV), and 238–328 (LKTH…MKQF). The next 6 membrane-spanning stretches (helical) occupy residues 37 to 57 (LRSFLAGGIAGCCAKTTVAPL), 88 to 108 (GYLGLYKGNGAMMIRIFPYGA), 134 to 154 (LMAGSMAGMTAVICTYPLDVV), 191 to 211 (GLMPTILGMAPYAGVSFFTFG), 244 to 264 (LLCGGVAGAIAQTISYPFDVT), and 299 to 319 (GLYRGLSLNYIRCIPSQAVAF).

This sequence belongs to the mitochondrial carrier (TC 2.A.29) family.

It is found in the mitochondrion inner membrane. May be involved in the transport of coenzyme A in the mitochondrial matrix. Very little is known about the physiological function of this carrier. In Mus musculus (Mouse), this protein is Solute carrier family 25 member 16.